Here is a 660-residue protein sequence, read N- to C-terminus: Leucine-rich repeat transmembrane protein FLRT2 (660 aa).

An N-terminal signal peptide occupies residues 1–35; that stretch reads MGLQTAKWPSHGTFVLKFWLIMSLGLYSHVSKLLA. 2 disulfide bridges follow: Cys-36-Cys-42 and Cys-40-Cys-49. In terms of domain architecture, LRRNT spans 36–67; the sequence is CPSVCRCDRNFVYCNERSLTSVPLGIPEGVTV. Residues 36–540 lie on the Extracellular side of the membrane; that stretch reads CPSVCRCDRN…QTTSHTMGSP (505 aa). LRR repeat units lie at residues 62–87, 88–108, 109–131, 132–157, 159–181, 183–202, 203–228, 229–251, 252–274, and 275–298; these read PEGV…LHNV, QSVH…MNLP, KNVR…ALAQ, LLKL…AFRE, ISLK…LPVD, QELR…AFQN, LTSL…TFSH, LTKL…DLPG, THLI…AFAN, and LRKL…VFDH. An N-linked (GlcNAc...) asparagine glycan is attached at Asn-202. Intrachain disulfides connect Cys-314–Cys-339 and Cys-316–Cys-360. Residues 338–361 enclose the LRRCT domain; it reads MCQGPEQVRGMAVRELNMNLLSCP. Positions 372–396 are enriched in low complexity; sequence PAPSTVSPTTQSPTVSVPSPSRGSV. Residues 372-413 form a disordered region; sequence PAPSTVSPTTQSPTVSVPSPSRGSVPPAPAPSKLPTIPDWDG. In terms of domain architecture, Fibronectin type-III spans 419–517; sequence PPISERIQLS…ICSEATTHAS (99 aa). A helical membrane pass occupies residues 541-561; the sequence is FLLAGLIGGAVIFVLVVLLSV. Over 562–660 the chain is Cytoplasmic; that stretch reads FCWHMHKKGR…SVPDLEHCHT (99 aa).

As to quaternary structure, self-associates (via leucine-rich repeats), giving rise to homooligomers. Interacts with FGFR1. Interacts with FGFR2. Interacts (via extracellular domain) with ADGRL1/LPHN1. Interacts (via extracellular domain) with ADGRL3 (via olfactomedin-like domain). Interacts (via extracellular domain) with UNC5D (via the first Ig-like domain). Can also interact (via extracellular domain) with UNC5B, but with much lower affinity. Interacts (via extracellular domain) with FN1. In terms of processing, N-glycosylated. Post-translationally, proteolytic cleavage in the juxtamembrane region gives rise to a soluble ectodomain. Cleavage is probably effected by a metalloprotease. In terms of tissue distribution, detected in brain (at protein level).

It localises to the cell membrane. It is found in the endoplasmic reticulum membrane. The protein localises to the synapse. The protein resides in the synaptosome. Its subcellular location is the cell junction. It localises to the focal adhesion. It is found in the secreted. The protein localises to the extracellular space. The protein resides in the extracellular matrix. Its subcellular location is the microsome membrane. In terms of biological role, functions in cell-cell adhesion, cell migration and axon guidance. Mediates cell-cell adhesion via its interactions with ADGRL3 and probably also other latrophilins that are expressed at the surface of adjacent cells. May play a role in the migration of cortical neurons during brain development via its interaction with UNC5D. Mediates axon growth cone collapse and plays a repulsive role in neuron guidance via its interaction with UNC5D, and possibly also other UNC-5 family members. Plays a role in fibroblast growth factor-mediated signaling cascades. Required for normal organization of the cardiac basement membrane during embryogenesis, and for normal embryonic epicardium and heart morphogenesis. In Rattus norvegicus (Rat), this protein is Leucine-rich repeat transmembrane protein FLRT2.